The sequence spans 64 residues: Conotoxin VnMLCL-042 (64 aa).

Positions 1 to 19 (MLCLPVFIILLLLASPAAP) are cleaved as a signal peptide. Positions 20-43 (NPLQTRIQSNLIRAGPEDANMKTD) are excised as a propeptide. Met63 bears the Methionine amide mark.

It belongs to the conotoxin T superfamily. In terms of tissue distribution, expressed by the venom duct.

It localises to the secreted. The chain is Conotoxin VnMLCL-042 from Conus ventricosus (Mediterranean cone).